The following is a 246-amino-acid chain: E3 ubiquitin-protein ligase LubX (246 aa).

U-box domains follow at residues 36-109 (TTPT…QTNY) and 131-204 (EIPD…RKRE).

As to quaternary structure, interacts with host CLK1. In terms of processing, ubiquitinated in the presence of host E1 ubiquitin-activating enzyme, E2 ubiquitin-conjugating enzyme (UBE2D1 or UBE2D3) and ubiquitin.

Its subcellular location is the secreted. It localises to the host cell. It catalyses the reaction S-ubiquitinyl-[E2 ubiquitin-conjugating enzyme]-L-cysteine + [acceptor protein]-L-lysine = [E2 ubiquitin-conjugating enzyme]-L-cysteine + N(6)-ubiquitinyl-[acceptor protein]-L-lysine.. Its function is as follows. Effector proteins function to alter host cell physiology and promote bacterial survival in host tissues. This protein is an E3 ubiquitin ligase that interferes with host's ubiquitination pathway. Acts in conjunction with host E2 ubiquitin-conjugating enzymes UBE2D1 (UBCH5A) or UBE2D3 (UBCH5C), and mediates polyubiquitination of host kinase CLK1. This Legionella pneumophila subsp. pneumophila (strain Philadelphia 1 / ATCC 33152 / DSM 7513) protein is E3 ubiquitin-protein ligase LubX (lubX).